We begin with the raw amino-acid sequence, 132 residues long: Small ribosomal subunit protein uS8 (132 aa).

It belongs to the universal ribosomal protein uS8 family. In terms of assembly, part of the 30S ribosomal subunit. Contacts proteins S5 and S12.

Functionally, one of the primary rRNA binding proteins, it binds directly to 16S rRNA central domain where it helps coordinate assembly of the platform of the 30S subunit. The protein is Small ribosomal subunit protein uS8 of Flavobacterium psychrophilum (strain ATCC 49511 / DSM 21280 / CIP 103535 / JIP02/86).